The sequence spans 354 residues: 3-dehydroquinate synthase (354 aa).

Residues 61–66 (DGESTK), 119–120 (TT), K132, K141, and 159–162 (FLET) each bind NAD(+). Zn(2+)-binding residues include E174, H238, and H254.

Belongs to the sugar phosphate cyclases superfamily. Dehydroquinate synthase family. Requires NAD(+) as cofactor. The cofactor is Co(2+). Zn(2+) is required as a cofactor.

The protein resides in the cytoplasm. The enzyme catalyses 7-phospho-2-dehydro-3-deoxy-D-arabino-heptonate = 3-dehydroquinate + phosphate. Its pathway is metabolic intermediate biosynthesis; chorismate biosynthesis; chorismate from D-erythrose 4-phosphate and phosphoenolpyruvate: step 2/7. Its function is as follows. Catalyzes the conversion of 3-deoxy-D-arabino-heptulosonate 7-phosphate (DAHP) to dehydroquinate (DHQ). In Saccharolobus solfataricus (strain ATCC 35092 / DSM 1617 / JCM 11322 / P2) (Sulfolobus solfataricus), this protein is 3-dehydroquinate synthase.